The sequence spans 403 residues: Ribosomal RNA large subunit methyltransferase I (403 aa).

Positions 9-88 (YPRLVLSKGR…ESIDIAFFTR (80 aa)) constitute a PUA domain.

It belongs to the methyltransferase superfamily. RlmI family.

It is found in the cytoplasm. The catalysed reaction is cytidine(1962) in 23S rRNA + S-adenosyl-L-methionine = 5-methylcytidine(1962) in 23S rRNA + S-adenosyl-L-homocysteine + H(+). In terms of biological role, specifically methylates the cytosine at position 1962 (m5C1962) of 23S rRNA. The protein is Ribosomal RNA large subunit methyltransferase I of Salmonella newport (strain SL254).